The chain runs to 147 residues: MRHYEVVVLIHPDQSEQVPAMVERYTSTVKADGGQVHRFEDWGRRQLAYSINKVHKAHYVLLNVECSDAALEELTTNFRYNDAVLRSLVIREDAAITEESFILKAEKEGRERKARPARAERRDDTEAEDLSDEEGVEAEDFEEEQGV.

The disordered stretch occupies residues 107-147 (KEGRERKARPARAERRDDTEAEDLSDEEGVEAEDFEEEQGV). Residues 125-147 (TEAEDLSDEEGVEAEDFEEEQGV) are compositionally biased toward acidic residues.

This sequence belongs to the bacterial ribosomal protein bS6 family.

Binds together with bS18 to 16S ribosomal RNA. This is Small ribosomal subunit protein bS6 from Cellvibrio japonicus (strain Ueda107) (Pseudomonas fluorescens subsp. cellulosa).